Reading from the N-terminus, the 452-residue chain is Nebulette (452 aa).

The interval Met1–Ala26 is disordered. The span at Glu11–Asn23 shows a compositional bias: acidic residues. Nebulin repeat units lie at residues Ser29–Asp63, Lys64–Ser98, Leu101–Gly135, Asp138–Thr172, Tyr173–Lys199, Lys206–Lys240, Leu263–Gly278, Leu279–Gly313, Ser315–Lys349, Ser352–Lys386, Gly389–Lys423, and Gly426–Val452.

As to quaternary structure, interacts (via nebulin repeats 1-5) with DESM (via rod region). Interacts (via SH3 domain) with XIRP2.

It is found in the cytoplasm. Binds to actin and plays an important role in the assembly of the Z-disk. May functionally link sarcomeric actin to the desmin intermediate filaments in the heart muscle sarcomeres. Isoform 2 might play a role in the assembly of focal adhesion. This Mus musculus (Mouse) protein is Nebulette (Nebl).